The chain runs to 351 residues: CCN family member 3 (351 aa).

The signal sequence occupies residues 1-21 (MSVFLRKQCLCLGFLLLHLLN). One can recognise an IGFBP N-terminal domain in the interval 25-99 (ATLRCPSRCP…NNETGICMVP (75 aa)). 6 cysteine pairs are disulfide-bonded: cysteine 29–cysteine 55, cysteine 33–cysteine 57, cysteine 37–cysteine 58, cysteine 44–cysteine 61, cysteine 69–cysteine 83, and cysteine 75–cysteine 96. A glycan (N-linked (GlcNAc...) asparagine) is linked at asparagine 91. A VWFC domain is found at 102–168 (DNCVFDGVIY…GECCEKWTCG (67 aa)). The TSP type-1 domain occupies 199–244 (NCIEQTTEWSACSKSCGMGLSTRVTNRNLQCEMVKQTRLCMVRPCE). Cysteine 238 carries S-palmitoyl cysteine lipidation. Intrachain disulfides connect cysteine 258–cysteine 295, cysteine 275–cysteine 309, cysteine 286–cysteine 325, cysteine 289–cysteine 327, and cysteine 294–cysteine 331. The 75-residue stretch at 258 to 332 (CLRTKKSLKS…GTCTCHSNCP (75 aa)) folds into the CTCK domain. Residue asparagine 274 is glycosylated (N-linked (GlcNAc...) asparagine).

The protein belongs to the CCN family. As to quaternary structure, interacts with FBLN1. Interacts (via CTCK domain) with NOTCH1 (via the EGF-like repeat region). Interacts with GJA1/CX43. Interacts with ITGA5:ITGB1, ITGAV:ITGB3 and ITGAV:ITGB5. Interacts with ZDHHC22; the interaction may lead to CCN3 palmitoylation. May be palmitoylated on Cys-238, which is important for extracellular secretion. In terms of tissue distribution, widely expressed. Highly expressed in neurons of dorsal root ganglia and dorsal horn of the spinal cord (at protein level). Expressed in astrocytes (at protein level). In cartilage, dominantly expressed in the chondrocyte territorial matrix.

The protein localises to the secreted. It localises to the cytoplasm. It is found in the cell junction. Its subcellular location is the gap junction. Functionally, immediate-early protein playing a role in various cellular processes including proliferation, adhesion, migration, differentiation and survival. Acts by binding to integrins or membrane receptors such as NOTCH1. Essential regulator of hematopoietic stem and progenitor cell function. Inhibits myogenic differentiation through the activation of Notch-signaling pathway. Inhibits vascular smooth muscle cells proliferation by increasing expression of cell-cycle regulators such as CDKN2B or CDKN1A independently of TGFB1 signaling. Ligand of integrins ITGAV:ITGB3 and ITGA5:ITGB1, acts directly upon endothelial cells to stimulate pro-angiogenic activities and induces angiogenesis. In endothelial cells, supports cell adhesion, induces directed cell migration (chemotaxis) and promotes cell survival. Also plays a role in cutaneous wound healing acting as integrin receptor ligand. Supports skin fibroblast adhesion through ITGA5:ITGB1 and ITGA6:ITGB1 and induces fibroblast chemotaxis through ITGAV:ITGB5. Seems to enhance bFGF-induced DNA synthesis in fibroblasts. Involved in bone regeneration as a negative regulator. Enhances the articular chondrocytic phenotype, whereas it repressed the one representing endochondral ossification. Impairs pancreatic beta-cell function, inhibits beta-cell proliferation and insulin secretion. Plays a role as negative regulator of endothelial pro-inflammatory activation reducing monocyte adhesion, its anti-inflammatory effects occur secondary to the inhibition of NF-kappaB signaling pathway. Contributes to the control and coordination of inflammatory processes in atherosclerosis. Attenuates inflammatory pain through regulation of IL1B- and TNF-induced MMP9, MMP2 and CCL2 expression. Inhibits MMP9 expression through ITGB1 engagement. Brain osteoanabolic hormone. During lactation, maintains the maternal skeleton and viability of offspring. In Rattus norvegicus (Rat), this protein is CCN family member 3 (Ccn3).